A 138-amino-acid chain; its full sequence is Putative pre-16S rRNA nuclease (138 aa).

It belongs to the YqgF nuclease family.

It localises to the cytoplasm. In terms of biological role, could be a nuclease involved in processing of the 5'-end of pre-16S rRNA. The sequence is that of Putative pre-16S rRNA nuclease from Salmonella schwarzengrund (strain CVM19633).